A 299-amino-acid polypeptide reads, in one-letter code: MHVVILGSAAGGGVPQWNCRCSICSLAWAGDSRVRPRTQSSIAVSPDGERWLLLNASPDIRQQIQANPQMHPREGLRHSPIHAVLLTNGDVDHVAGLLTLREGQPFTLYATPGILASVSDNRVFDVMAAEVVKRQTIALNETFEPVPGLSVTLFSVPGKVPLWLEDASMEIGAETETTVGTMIEAGGKRLAYIPGCARVTEDLKARIAGADALLFDGTVLEDDDMIRAGVGTKTGWRMGHIQMNGETGSIASLADVEIGRRVFVHINNTNPVLIEDSSERASVEARGWTVAHDGLTLDL.

This sequence belongs to the PqqB family.

The protein operates within cofactor biosynthesis; pyrroloquinoline quinone biosynthesis. Its function is as follows. May be involved in the transport of PQQ or its precursor to the periplasm. The chain is Coenzyme PQQ synthesis protein B from Methylorubrum extorquens (strain PA1) (Methylobacterium extorquens).